The primary structure comprises 326 residues: MIEKSQACHDSLLDSVGQTPMVQLHQLFPKHEVFAKLEYMNPGGSMKDRPAKYIIEHGIKHGLITENTHLIESTSGNLGIALAMIAKIKGLKLTCVVDPKISPTNLKIIKSYGANVEMVEEPDAHGGYLMTRIAKVQELLATIDDAYWINQYANELNWQSHYHGAGTEIVETIKQPIDYFVAPVSTTGSIMGMSRKIKEVHPNAQIVAVDAKGSVIFGDKPINRELPGIGASRVPEILNRSEINQVIHVDDYQSALGCRKLIDYEGIFAGGSTGSIIAAIEQLITSIEEGATIVTILPDRGDRYLDLVYSDTWLEKMKSRQGVKSE.

Lysine 47 carries the N6-(pyridoxal phosphate)lysine modification. Residues asparagine 77, 185–189, and serine 272 each bind pyridoxal 5'-phosphate; that span reads STTGS.

This sequence belongs to the cysteine synthase/cystathionine beta-synthase family. SbnA subfamily. Homodimer. Pyridoxal 5'-phosphate is required as a cofactor.

The catalysed reaction is O-phospho-L-serine + L-glutamate = N-[(2S)-2-amino-2-carboxyethyl]-L-glutamate + phosphate + H(+). The protein operates within siderophore biosynthesis. Catalyzes the synthesis of N-((2S)-2-amino-2-carboxyethyl)-L-glutamate (ACEGA) from O-phospho-L-serine and L-glutamate. Involved in the biosynthesis of L-2,3-diaminopropionic acid (L-Dap), a precursor of staphyloferrin B and antibiotics. The protein is N-(2-amino-2-carboxyethyl)-L-glutamate synthase (sbnA) of Staphylococcus aureus (strain COL).